We begin with the raw amino-acid sequence, 1261 residues long: Pentatricopeptide repeat-containing protein 5, mitochondrial (1261 aa).

15 PPR repeats span residues 365–404 (HPDLLPALIRALGRAKRLNSCFQLLERYNLSDPTSDTSMT), 405–442 (NVRSWEGLMEAYFDTDHHVEASALMKSFFRKADSNQVI), 443–479 (PSSILDCFLRRLAQLGHYKESAEWLGMAIEKISTYKA), 480–514 (SPSTLSSILEAACLNNNDKFAIAFVRKYTLSRFSD), 550–584 (TNFTFSNVYKAFIENGKIDVALRLLRKHIDPKVSL), 806–849 (HPEV…EKAN), 852–886 (MALILDAMILSSSFARQFKSSNLFCDNMKMLGYIP), 887–924 (RASTFAHLINNSTRRGDTDDATTALNIFEETKRHNVKP), 925–959 (SVFLYNAVLSKLGRARRTTECWKLFQEMKESGLLP), 960–995 (TSVTYGTVINAACRIGDESLAEKLFAEMENQPNYQP), 996–1031 (RVAPYNTMIQFEVQTMFNREKALFYYNRLCATDIEP), 1032–1068 (SSHTYKLLMDAYGTLKPVNVGSVKAVLELMERTDVPI), 1109–1143 (DANLFQSQIESLIANDRIVEGIQIVSDMKRYNVSL), 1144–1179 (NAYIVNALIKGFTKVGMISKARYYFDLLECEGMSGK), and 1180–1214 (EPSTYENMVRAYLSVNDGRKAMEIVEQLKRKRYPL). A disordered region spans residues 1225-1261 (NSHMGQKPKRRSLNTSHSSLASLGNASTQHSINSSIN). Residues 1237-1261 (LNTSHSSLASLGNASTQHSINSSIN) are compositionally biased toward polar residues.

The protein localises to the mitochondrion. In terms of biological role, mitochondrial RNA-binding protein that acts as a general negative regulator of mitochondrial translation. In Schizosaccharomyces pombe (strain 972 / ATCC 24843) (Fission yeast), this protein is Pentatricopeptide repeat-containing protein 5, mitochondrial (ppr5).